We begin with the raw amino-acid sequence, 833 residues long: Leucine--tRNA ligase (833 aa).

A 'HIGH' region motif is present at residues 41-52 (PYPSGAGLHVGH). The short motif at 610–614 (KMSKS) is the 'KMSKS' region element. Lys613 is a binding site for ATP.

It belongs to the class-I aminoacyl-tRNA synthetase family.

The protein localises to the cytoplasm. It carries out the reaction tRNA(Leu) + L-leucine + ATP = L-leucyl-tRNA(Leu) + AMP + diphosphate. The chain is Leucine--tRNA ligase from Streptococcus pyogenes serotype M28 (strain MGAS6180).